The primary structure comprises 437 residues: Doublesex- and mab-3-related transcription factor A2 (437 aa).

The segment at residues 49–96 (CARCRNHGVVSALKGHKRYCRWKDCMCAKCTLIAERQRVMAAQVALRR) is a DNA-binding region (DM). Residues 160–253 (IPRSMTPQLP…DPSSSSLARQ (94 aa)) form a disordered region. Low complexity-rich tracts occupy residues 179 to 201 (SEPVSGSAPGASSPEAQPGSGSE) and 223 to 235 (SPSLISPLSSESG). The region spanning 254 to 289 (RTPINILTRVFPAQKRSVLELVLQGCGGDVVQAIEQ) is the DMA domain.

This sequence belongs to the DMRT family.

Its subcellular location is the nucleus. In terms of biological role, may be involved in sexual development. The chain is Doublesex- and mab-3-related transcription factor A2 (dmrta2) from Xenopus laevis (African clawed frog).